A 102-amino-acid chain; its full sequence is Large ribosomal subunit protein bL21 (102 aa).

This sequence belongs to the bacterial ribosomal protein bL21 family. As to quaternary structure, part of the 50S ribosomal subunit. Contacts protein L20.

This protein binds to 23S rRNA in the presence of protein L20. The sequence is that of Large ribosomal subunit protein bL21 from Geobacter sulfurreducens (strain ATCC 51573 / DSM 12127 / PCA).